A 1097-amino-acid chain; its full sequence is MSSSALQVAKTATYLPDLVEVQRASFKWFLEKGLIEELQNFSPISDYTGKLELHFIGEEYRLKRPRHDVEEAKRRDATFASQMYVTCRLINKETGEIKEQEVFIGELPLMTERGTFIINGAERVIVNQIVRSPGVYFKDELDKNGRRTYNANVIPNRGAWLKFETDKNNLLYVRVDKTRKINAHVLMRAMGLSDNDVVDKLRHPEFYQNSIDSANDEGINSEDQALLELYKKLRPGEPPSVSGGQQLLNSRFFDPKRYDLGRVGRYKINKKLRLTVPDDVRTLTHEDVLSTIDYLINLELDIGGASLDDIDHLGNRRVRSVGELLQNQVRVGLNRLERIIKERMTVGETDSLTPAQLVNPKPLVAAIKEFFGSSQLSQFMDQTNPLAELTHKRRISALGPGGLTRERAGFAVRDIHPSHYGRLCPIETPEGPNAGLINSLATHARVNEYGFIETPFWEVKNGKVNKEGNPVYLSADLEDECRVAPGDVATDKDGNIIADLIPVRYRQDFEKVPPHQVDYVQLSPVQVISVATSLIPFLEHDDANRALMGSNMQRQAVPLLRPERPLVGTGLESQVARDSGMVPITKVNGTVSYVDANEIVVKDDHGNEHFHYLQKYQRSNQDTCLNQRPIVKIGDKVISGQVLADGSACEGGEIALGQNVLIAYMPWEGYNYEDAILVSERMVTDDLYTSVHIEKYEIEARQTKLGPEEITREIPNISEESLNNLDEMGIIRIGAFVESGDILVGKVTPKGESDQPPEEKLLRAIFGEKARDVRDNSLRVPKTEKGRVLDVRIYTREQGDELPPGANMVVRVYVAQRRKIQVGDKMAGRHGNKGIISRILPREDMPYLPDGTPVDIVLNPLGVPSRMNVGQVFELLMGWAAANLNCRVKVVPFDEMYGAEKSHQTVQAFLEEASKQPGKAWVYNPEDPGKLLLKDGRTGEPFDQPVAVGYSHFLKLVHLVDDKIHARSTGPYSLVTQQPLGGKAQQGGQRLGEMEVWALEAYGAAYTLQELLTVKSDDMQGRNEALNAIVKGKPIPRPGTPESFKVLMRELQSLGLDIGVYTDEGKEVDLMQDINPRRNTPSRPTYESLGTSEYEED.

The tract at residues 1072-1097 (QDINPRRNTPSRPTYESLGTSEYEED) is disordered. The span at 1077–1091 (RRNTPSRPTYESLGT) shows a compositional bias: polar residues.

This sequence belongs to the RNA polymerase beta chain family. As to quaternary structure, in cyanobacteria the RNAP catalytic core is composed of 2 alpha, 1 beta, 1 beta', 1 gamma and 1 omega subunit. When a sigma factor is associated with the core the holoenzyme is formed, which can initiate transcription.

It carries out the reaction RNA(n) + a ribonucleoside 5'-triphosphate = RNA(n+1) + diphosphate. Its function is as follows. DNA-dependent RNA polymerase catalyzes the transcription of DNA into RNA using the four ribonucleoside triphosphates as substrates. The protein is DNA-directed RNA polymerase subunit beta of Prochlorococcus marinus (strain AS9601).